The following is a 185-amino-acid chain: Alpha-S1-casein (185 aa).

A signal peptide spans 1–15 (MRLLILTCLVAVALA). Phosphoserine is present on residues Ser31, Ser33, Ser41, Ser71, Ser85, Ser86, Ser88, Ser89, Ser90, and Ser91.

The protein belongs to the alpha-casein family. As to quaternary structure, heteromultimers of alpha-s1 casein and kappa-casein; disulfide-linked. In terms of processing, not glycosylated. As to expression, mammary gland specific. Secreted in milk.

The protein localises to the secreted. Its function is as follows. Important role in the capacity of milk to transport calcium phosphate. In terms of biological role, casoxin D acts as opioid antagonist and has vasorelaxing activity mediated by bradykinin B1 receptors. The chain is Alpha-S1-casein (CSN1S1) from Homo sapiens (Human).